A 37-amino-acid chain; its full sequence is Large ribosomal subunit protein bL36 (37 aa).

The protein belongs to the bacterial ribosomal protein bL36 family.

This chain is Large ribosomal subunit protein bL36, found in Desulforamulus reducens (strain ATCC BAA-1160 / DSM 100696 / MI-1) (Desulfotomaculum reducens).